The following is a 106-amino-acid chain: Large ribosomal subunit protein uL30 (106 aa).

It belongs to the universal ribosomal protein uL30 family. In terms of assembly, part of the 50S ribosomal subunit.

The protein is Large ribosomal subunit protein uL30 of Ruthia magnifica subsp. Calyptogena magnifica.